Consider the following 278-residue polypeptide: Tryptophan synthase alpha chain (278 aa).

Catalysis depends on proton acceptor residues Glu-50 and Asp-61.

Belongs to the TrpA family. Tetramer of two alpha and two beta chains.

It carries out the reaction (1S,2R)-1-C-(indol-3-yl)glycerol 3-phosphate + L-serine = D-glyceraldehyde 3-phosphate + L-tryptophan + H2O. It functions in the pathway amino-acid biosynthesis; L-tryptophan biosynthesis; L-tryptophan from chorismate: step 5/5. In terms of biological role, the alpha subunit is responsible for the aldol cleavage of indoleglycerol phosphate to indole and glyceraldehyde 3-phosphate. The protein is Tryptophan synthase alpha chain of Rhodopseudomonas palustris (strain BisA53).